The chain runs to 198 residues: Probable GTP-binding protein EngB (198 aa).

The 174-residue stretch at 22-195 (NRVEVAFVGR…IDNLFLEFAT (174 aa)) folds into the EngB-type G domain. Residues 30–37 (GRSNVGKS), 57–61 (GKTRL), 75–78 (DLPG), 142–145 (TKSD), and 174–176 (FSS) each bind GTP. Ser37 and Thr59 together coordinate Mg(2+).

It belongs to the TRAFAC class TrmE-Era-EngA-EngB-Septin-like GTPase superfamily. EngB GTPase family. Requires Mg(2+) as cofactor.

Its function is as follows. Necessary for normal cell division and for the maintenance of normal septation. This Clostridium beijerinckii (strain ATCC 51743 / NCIMB 8052) (Clostridium acetobutylicum) protein is Probable GTP-binding protein EngB.